We begin with the raw amino-acid sequence, 147 residues long: Large ribosomal subunit protein bL9 (147 aa).

The protein belongs to the bacterial ribosomal protein bL9 family.

In terms of biological role, binds to the 23S rRNA. The chain is Large ribosomal subunit protein bL9 from Clostridium botulinum (strain Alaska E43 / Type E3).